A 354-amino-acid polypeptide reads, in one-letter code: uncharacterized protein (354 aa).

Belongs to the asfivirus B354L family.

This is an uncharacterized protein from Ornithodoros (relapsing fever ticks).